A 127-amino-acid polypeptide reads, in one-letter code: Holo-[acyl-carrier-protein] synthase (127 aa).

2 residues coordinate Mg(2+): D8 and E56.

It belongs to the P-Pant transferase superfamily. AcpS family. Mg(2+) serves as cofactor.

The protein localises to the cytoplasm. It catalyses the reaction apo-[ACP] + CoA = holo-[ACP] + adenosine 3',5'-bisphosphate + H(+). Transfers the 4'-phosphopantetheine moiety from coenzyme A to a Ser of acyl-carrier-protein. In Cytophaga hutchinsonii (strain ATCC 33406 / DSM 1761 / CIP 103989 / NBRC 15051 / NCIMB 9469 / D465), this protein is Holo-[acyl-carrier-protein] synthase.